A 194-amino-acid polypeptide reads, in one-letter code: Large ribosomal subunit protein uL18 (194 aa).

It belongs to the universal ribosomal protein uL18 family. Part of the 50S ribosomal subunit. Contacts the 5S and 23S rRNAs.

In terms of biological role, this is one of the proteins that bind and probably mediate the attachment of the 5S RNA into the large ribosomal subunit, where it forms part of the central protuberance. The sequence is that of Large ribosomal subunit protein uL18 from Methanococcus aeolicus (strain ATCC BAA-1280 / DSM 17508 / OCM 812 / Nankai-3).